A 162-amino-acid polypeptide reads, in one-letter code: uncharacterized protein (162 aa).

This is an uncharacterized protein from Schizosaccharomyces pombe (strain 972 / ATCC 24843) (Fission yeast).